We begin with the raw amino-acid sequence, 206 residues long: Large ribosomal subunit protein uL4 (206 aa).

Positions 46 to 95 are disordered; that stretch reads GNRAQKTRAEVKHSTKKPWRQKGTGRARSGMTSSPLWRKGGRAFPNKPDE. Residues 59-70 are compositionally biased toward basic residues; it reads STKKPWRQKGTG.

It belongs to the universal ribosomal protein uL4 family. Part of the 50S ribosomal subunit.

In terms of biological role, one of the primary rRNA binding proteins, this protein initially binds near the 5'-end of the 23S rRNA. It is important during the early stages of 50S assembly. It makes multiple contacts with different domains of the 23S rRNA in the assembled 50S subunit and ribosome. Functionally, forms part of the polypeptide exit tunnel. The protein is Large ribosomal subunit protein uL4 of Neisseria meningitidis serogroup C (strain 053442).